Reading from the N-terminus, the 469-residue chain is Probable periplasmic serine endoprotease DegP-like (469 aa).

The first 25 residues, 1–25 (MKVCQKYTAVLLVWLSAVVSMRAGA), serve as a signal peptide directing secretion. Residues His108, Asp138, and Ser211 each act as charge relay system in the active site. Substrate-binding positions include 209-211 (GNS) and 266-270 (LGVLI). PDZ domains follow at residues 255-346 (LKDT…VRRG) and 352-457 (AVEI…IRQG).

It belongs to the peptidase S1C family.

The protein localises to the periplasm. It carries out the reaction Acts on substrates that are at least partially unfolded. The cleavage site P1 residue is normally between a pair of hydrophobic residues, such as Val-|-Val.. In terms of biological role, might be efficient in the degradation of transiently denatured and unfolded proteins which accumulate in the periplasm following stress conditions. The polypeptide is Probable periplasmic serine endoprotease DegP-like (mucD) (Hahella chejuensis (strain KCTC 2396)).